The following is a 255-amino-acid chain: Glutamate racemase (255 aa).

Substrate contacts are provided by residues 7–8 (DS) and 39–40 (YG). The Proton donor/acceptor role is filled by Cys-70. Residue 71-72 (NT) coordinates substrate. Cys-181 serves as the catalytic Proton donor/acceptor. Substrate is bound at residue 182–183 (TH).

Belongs to the aspartate/glutamate racemases family.

The catalysed reaction is L-glutamate = D-glutamate. It functions in the pathway cell wall biogenesis; peptidoglycan biosynthesis. Provides the (R)-glutamate required for cell wall biosynthesis. This is Glutamate racemase from Helicobacter pylori (strain HPAG1).